A 436-amino-acid chain; its full sequence is Chorion-specific transcription factor GCMa (436 aa).

Positions 14 to 169 form a DNA-binding region, GCM; that stretch reads LSWDINDVKL…KLEAEARRAM (156 aa). Positions 76, 82, 86, 113, 116, 125, 152, and 154 each coordinate Zn(2+). The disordered stretch occupies residues 171–202; the sequence is KVNTAPSSVSLSLKGSTETRSLPGETQSQGSL. Over residues 174-202 the composition is skewed to polar residues; sequence TAPSSVSLSLKGSTETRSLPGETQSQGSL.

Polyubiquitinated in the presence of UBE2D2 and FBXW2 (in vitro). In terms of tissue distribution, highly expressed in the placenta. Expressed in trophoblast cells of the villi.

The protein localises to the nucleus. In terms of biological role, transcription factor involved in the control of expression of placental growth factor (PGF) and other placenta-specific genes. Binds to the trophoblast-specific element 2 (TSE2) of the aromatase gene enhancer. Binds to the SYDE1 promoter. Has a central role in mediating the differentiation of trophoblast cells along both the villous and extravillous pathways in placental development. This is Chorion-specific transcription factor GCMa (GCM1) from Homo sapiens (Human).